The following is a 97-amino-acid chain: Citrate lyase acyl carrier protein (97 aa).

Residue S14 is modified to O-(phosphoribosyl dephospho-coenzyme A)serine.

It belongs to the CitD family. In terms of assembly, oligomer with a subunit composition of (alpha,beta,gamma)6.

The protein localises to the cytoplasm. Its function is as follows. Covalent carrier of the coenzyme of citrate lyase. The chain is Citrate lyase acyl carrier protein from Enterobacter sp. (strain 638).